Reading from the N-terminus, the 579-residue chain is Solute carrier family 15 member 5 (579 aa).

The next 11 helical transmembrane spans lie at 77–97 (CQAA…PVFV), 110–130 (LVYI…VVAF), 154–174 (LFYV…AIVC), 191–211 (SFFN…FLGI), 221–241 (ALVL…LHMI), 304–324 (TFFL…MCIM), 343–363 (GFLL…LILA), 386–406 (CIIA…FFEI), 422–442 (VLTV…LLGV), 472–492 (TLFN…VYLI), and 509–529 (SFFF…CSVS).

It belongs to the major facilitator superfamily. Proton-dependent oligopeptide transporter (POT/PTR) (TC 2.A.17) family.

The protein resides in the membrane. In terms of biological role, proton oligopeptide cotransporter. The sequence is that of Solute carrier family 15 member 5 (SLC15A5) from Homo sapiens (Human).